Reading from the N-terminus, the 611-residue chain is Leukotriene A-4 hydrolase (611 aa).

Lys73 carries the post-translational modification N6-acetyllysine. A peptide-binding positions include 135 to 137 (QCQ) and 267 to 272 (PYGGME). His296 contributes to the Zn(2+) binding site. Residue Glu297 is the Proton acceptor of the active site. Zn(2+) is bound by residues His300 and Glu319. Position 337 is an N6-acetyllysine (Lys337). Tyr384 functions as the Proton donor in the catalytic mechanism. Residue Ser416 is modified to Phosphoserine. Residue 564–566 (RMK) participates in a peptide binding. The residue at position 573 (Lys573) is an N6-acetyllysine.

It belongs to the peptidase M1 family. Requires Zn(2+) as cofactor. Post-translationally, phosphorylation at Ser-416 inhibits enzymatic activity.

Its subcellular location is the cytoplasm. The enzyme catalyses leukotriene A4 + H2O = leukotriene B4. It participates in lipid metabolism; leukotriene B4 biosynthesis. With respect to regulation, inhibited by bestatin. Subject to suicide inhibition by leukotriene A4. Its function is as follows. Epoxide hydrolase that catalyzes the final step in the biosynthesis of the pro-inflammatory mediator leukotriene B4. Also has aminopeptidase activity. This is Leukotriene A-4 hydrolase (LTA4H) from Chinchilla lanigera (Long-tailed chinchilla).